The primary structure comprises 415 residues: MQLTAVGLNHQTAPLSIREKLAFAAACLPEAVRNLARSNAATEAVILSTCNRTELYCVGDSEEIIRWLADYHSLPIEEISPYLYTLGMQETVRHAFRVACGLDSMVLGEPQILGQIKDAVRVAQEQESMGKKLNALFQKTFSVAKEVRTDTAVGENSVSMASASVKLAEQIFPDIGDLNVLFIGAGEMIELVATYFAAKSPRLMTVANRTLARAQELCDKLGVNAEPCLLSDLPAILHEYDVVVSSTASQLPIVGKGMVERALKQRQSMPLFMLDLAVPRDIEAEVGDLNDAYLYTVDDMVNIVQSGKEARQKAAAAAETLVSEKVAEFVRQQQGRQSVPLIRALRDEGEKARKQVLENAMKQLAKGATAEEVLERLSIQLTNKLLHSPTQTLNKAGEEDKDLVHAVAQIYHLDK.

Residues 49–52 (TCNR), S104, 109–111 (EPQ), and Q115 each bind substrate. C50 acts as the Nucleophile in catalysis. Position 184 to 189 (184 to 189 (GAGEMI)) interacts with NADP(+).

The protein belongs to the glutamyl-tRNA reductase family. As to quaternary structure, homodimer.

The catalysed reaction is (S)-4-amino-5-oxopentanoate + tRNA(Glu) + NADP(+) = L-glutamyl-tRNA(Glu) + NADPH + H(+). It participates in porphyrin-containing compound metabolism; protoporphyrin-IX biosynthesis; 5-aminolevulinate from L-glutamyl-tRNA(Glu): step 1/2. Catalyzes the NADPH-dependent reduction of glutamyl-tRNA(Glu) to glutamate 1-semialdehyde (GSA). The chain is Glutamyl-tRNA reductase from Neisseria meningitidis serogroup C / serotype 2a (strain ATCC 700532 / DSM 15464 / FAM18).